Here is a 314-residue protein sequence, read N- to C-terminus: tRNA dimethylallyltransferase (314 aa).

13 to 20 (GPTAVGKT) contacts ATP. 15–20 (TAVGKT) is a substrate binding site. Positions 38–41 (DSMQ) are interaction with substrate tRNA.

This sequence belongs to the IPP transferase family. As to quaternary structure, monomer. The cofactor is Mg(2+).

It catalyses the reaction adenosine(37) in tRNA + dimethylallyl diphosphate = N(6)-dimethylallyladenosine(37) in tRNA + diphosphate. Functionally, catalyzes the transfer of a dimethylallyl group onto the adenine at position 37 in tRNAs that read codons beginning with uridine, leading to the formation of N6-(dimethylallyl)adenosine (i(6)A). The protein is tRNA dimethylallyltransferase of Bacillus velezensis (strain DSM 23117 / BGSC 10A6 / LMG 26770 / FZB42) (Bacillus amyloliquefaciens subsp. plantarum).